The primary structure comprises 256 residues: Hydroxyethylthiazole kinase (256 aa).

Met38 is a binding site for substrate. ATP contacts are provided by Arg114 and Thr159. Position 186 (Gly186) interacts with substrate.

The protein belongs to the Thz kinase family. Requires Mg(2+) as cofactor.

It carries out the reaction 5-(2-hydroxyethyl)-4-methylthiazole + ATP = 4-methyl-5-(2-phosphooxyethyl)-thiazole + ADP + H(+). It participates in cofactor biosynthesis; thiamine diphosphate biosynthesis; 4-methyl-5-(2-phosphoethyl)-thiazole from 5-(2-hydroxyethyl)-4-methylthiazole: step 1/1. Its function is as follows. Catalyzes the phosphorylation of the hydroxyl group of 4-methyl-5-beta-hydroxyethylthiazole (THZ). The protein is Hydroxyethylthiazole kinase of Streptococcus agalactiae serotype Ia (strain ATCC 27591 / A909 / CDC SS700).